The following is a 182-amino-acid chain: Protein GrpE (182 aa).

The protein belongs to the GrpE family. In terms of assembly, homodimer.

It is found in the cytoplasm. In terms of biological role, participates actively in the response to hyperosmotic and heat shock by preventing the aggregation of stress-denatured proteins, in association with DnaK and GrpE. It is the nucleotide exchange factor for DnaK and may function as a thermosensor. Unfolded proteins bind initially to DnaJ; upon interaction with the DnaJ-bound protein, DnaK hydrolyzes its bound ATP, resulting in the formation of a stable complex. GrpE releases ADP from DnaK; ATP binding to DnaK triggers the release of the substrate protein, thus completing the reaction cycle. Several rounds of ATP-dependent interactions between DnaJ, DnaK and GrpE are required for fully efficient folding. The polypeptide is Protein GrpE (Aquifex aeolicus (strain VF5)).